Consider the following 229-residue polypeptide: Flavin-dependent thymidylate synthase (229 aa).

Residues 1–217 form the ThyX domain; that stretch reads MEFKVLDKGF…PWTFESFLKF (217 aa). FAD-binding positions include T55, 78–80, and E86; that span reads RHR. DUMP contacts are provided by residues 75-78, 86-90, and R156; these read QWFR and EASLR. The short motif at 78–88 is the ThyX motif element; that stretch reads RHRIGSFNEAS. Residues 172 to 174 and N178 each bind FAD; that span reads NAR. R183 contacts dUMP. Residue R183 is the Involved in ionization of N3 of dUMP, leading to its activation of the active site.

This sequence belongs to the thymidylate synthase ThyX family. As to quaternary structure, homotetramer. FAD serves as cofactor.

The enzyme catalyses dUMP + (6R)-5,10-methylene-5,6,7,8-tetrahydrofolate + NADPH + H(+) = dTMP + (6S)-5,6,7,8-tetrahydrofolate + NADP(+). Its pathway is pyrimidine metabolism; dTTP biosynthesis. Its function is as follows. Catalyzes the reductive methylation of 2'-deoxyuridine-5'-monophosphate (dUMP) to 2'-deoxythymidine-5'-monophosphate (dTMP) while utilizing 5,10-methylenetetrahydrofolate (mTHF) as the methyl donor, and NADPH and FADH(2) as the reductant. In Thermosipho melanesiensis (strain DSM 12029 / CIP 104789 / BI429), this protein is Flavin-dependent thymidylate synthase.